We begin with the raw amino-acid sequence, 147 residues long: MKSLKKQRRIQIIALATVALVGSTALIGYAMRDGINYFRSPSQVMETPPEPTETFRIGGLVEEGTLQRGQGEAVRFSVTDGGASVPVTYVGVLPDLFEENQGMVGTGRYVNGVFEASEILAKHDETYMPKEVVDALKEQGVYREGDS.

Residues 1–9 (MKSLKKQRR) are Cytoplasmic-facing. A helical; Signal-anchor for type II membrane protein membrane pass occupies residues 10–30 (IQIIALATVALVGSTALIGYA). Residues 31–147 (MRDGINYFRS…EQGVYREGDS (117 aa)) lie on the Periplasmic side of the membrane. Histidine 123 and tyrosine 127 together coordinate heme.

The protein belongs to the CcmE/CycJ family.

The protein resides in the cell inner membrane. Its function is as follows. Heme chaperone required for the biogenesis of c-type cytochromes. Transiently binds heme delivered by CcmC and transfers the heme to apo-cytochromes in a process facilitated by CcmF and CcmH. This Ruegeria sp. (strain TM1040) (Silicibacter sp.) protein is Cytochrome c-type biogenesis protein CcmE.